The primary structure comprises 530 residues: Bifunctional purine biosynthesis protein PurH (530 aa).

Residues 1 to 148 (MEQARPIRRA…KNHKDVAIVV (148 aa)) enclose the MGS-like domain.

This sequence belongs to the PurH family.

It carries out the reaction (6R)-10-formyltetrahydrofolate + 5-amino-1-(5-phospho-beta-D-ribosyl)imidazole-4-carboxamide = 5-formamido-1-(5-phospho-D-ribosyl)imidazole-4-carboxamide + (6S)-5,6,7,8-tetrahydrofolate. The catalysed reaction is IMP + H2O = 5-formamido-1-(5-phospho-D-ribosyl)imidazole-4-carboxamide. It functions in the pathway purine metabolism; IMP biosynthesis via de novo pathway; 5-formamido-1-(5-phospho-D-ribosyl)imidazole-4-carboxamide from 5-amino-1-(5-phospho-D-ribosyl)imidazole-4-carboxamide (10-formyl THF route): step 1/1. It participates in purine metabolism; IMP biosynthesis via de novo pathway; IMP from 5-formamido-1-(5-phospho-D-ribosyl)imidazole-4-carboxamide: step 1/1. In Aeromonas hydrophila subsp. hydrophila (strain ATCC 7966 / DSM 30187 / BCRC 13018 / CCUG 14551 / JCM 1027 / KCTC 2358 / NCIMB 9240 / NCTC 8049), this protein is Bifunctional purine biosynthesis protein PurH.